Consider the following 328-residue polypeptide: MAKHVKVAVTGAAGQIGYALLFRLASGQAFGLDTTVDLHLLEIEPALPALKGVVMELEDCAFPLLRNMVVTSDPRVAFNDVNWALLVGAAPRKAGMERKDLLEKNGSIFAGQGKAINENAASDVRIFVVGNPCNTNCLIAMNNAPDIPKDRFYAMTRLDQNRAIGQLALKAGVDVPSVKNMIIWGNHSSTQYPDFYHATIDGKPATEVIRDKNWLLNDFIPVIQQRGAAVIKARGASSAASAANAALDSVWSLINTTPADDNYSVALCAQGRYGVDEGLIFSFPCRTENGVVSVIEEIEHNEFGQQKLKETLDELREERDAVEALGLI.

G11–G17 contributes to the NAD(+) binding site. Substrate-binding residues include R92 and R98. NAD(+)-binding positions include N105, Q112, and V129–N131. The substrate site is built by N131 and R162. H187 functions as the Proton acceptor in the catalytic mechanism.

This sequence belongs to the LDH/MDH superfamily. MDH type 2 family.

It catalyses the reaction (S)-malate + NAD(+) = oxaloacetate + NADH + H(+). In terms of biological role, catalyzes the reversible oxidation of malate to oxaloacetate. The protein is Malate dehydrogenase of Coxiella burnetii (strain CbuG_Q212) (Coxiella burnetii (strain Q212)).